Here is a 469-residue protein sequence, read N- to C-terminus: Probable lysophospholipase BODYGUARD 1 (469 aa).

Positions 1–45 are cleaved as a signal peptide; the sequence is MGFSRSLNRTVGVFVFFILDIVDFLLCFTYKTLDFFFESEWKPCY. Residue C46 is the site of N-palmitoyl cysteine attachment. Positions 185-439 constitute an AB hydrolase-1 domain; it reads VVFIHGFLSS…IHVVPDKDHI (255 aa). H189 is a catalytic residue. Residue S263 is the Nucleophile of the active site. Catalysis depends on charge relay system residues D410 and H438.

In terms of tissue distribution, expressed exclusively in protodermal and epidermal cells of all organs, especially on adaxial sides.

The protein localises to the cell membrane. Its subcellular location is the secreted. It is found in the cell wall. In terms of biological role, controls cuticle development and morphogenesis, by promoting cutin and suberin monomers loading. Involved in the regulation of abscissic acid (ABA) biosynthesis in response to osmotic stress. Plays an important role in osmotic stress and drought resistance. Required to ensure a reduced permeability of aerial tissue, thus preventing transpiration. Regulates lateral root hair development. Functionally, required for infection by the pathogenic necrotrophic fungus Botrytis cinerea, probably by regulating structural traits of the cuticle. The chain is Probable lysophospholipase BODYGUARD 1 from Arabidopsis thaliana (Mouse-ear cress).